The sequence spans 163 residues: Ureidoglycolate lyase (163 aa).

It belongs to the ureidoglycolate lyase family. Homodimer. Ni(2+) serves as cofactor.

The catalysed reaction is (S)-ureidoglycolate = urea + glyoxylate. Its pathway is nitrogen metabolism; (S)-allantoin degradation. In terms of biological role, catalyzes the catabolism of the allantoin degradation intermediate (S)-ureidoglycolate, generating urea and glyoxylate. Involved in the utilization of allantoin as nitrogen source. The protein is Ureidoglycolate lyase of Mesorhizobium japonicum (strain LMG 29417 / CECT 9101 / MAFF 303099) (Mesorhizobium loti (strain MAFF 303099)).